We begin with the raw amino-acid sequence, 673 residues long: Putative potassium transport system protein Kup 1 (673 aa).

Helical transmembrane passes span 14–34 (GAGF…SPLY), 58–78 (LSLI…WIAL), 101–121 (WLII…ALTP), 147–167 (LPIV…QRFG), 175–195 (FGPV…INLF), 196–216 (GDFS…LLSP), 220–240 (AGIF…ALYS), 252–272 (VSWP…AAWL), 294–314 (LIIF…QALI), 345–365 (LYIP…VVYF), 374–394 (AYGL…TVYL), 403–423 (VFVV…FAAS), and 427–447 (FLHG…VMAI).

The protein belongs to the HAK/KUP transporter (TC 2.A.72) family.

It localises to the cell membrane. It carries out the reaction K(+)(in) + H(+)(in) = K(+)(out) + H(+)(out). Its function is as follows. Transport of potassium into the cell. Likely operates as a K(+):H(+) symporter. In Lactococcus lactis subsp. cremoris (strain MG1363), this protein is Putative potassium transport system protein Kup 1.